A 647-amino-acid chain; its full sequence is UvrABC system protein C (647 aa).

The GIY-YIG domain maps to 16–95; that stretch reads VEPGVYRFRD…IKEFDPRFNV (80 aa). Positions 208-243 constitute a UVR domain; it reads DRFARELEQQMNAAAAELDFERAARLRDDLGALKRA.

Belongs to the UvrC family. In terms of assembly, interacts with UvrB in an incision complex.

The protein resides in the cytoplasm. The UvrABC repair system catalyzes the recognition and processing of DNA lesions. UvrC both incises the 5' and 3' sides of the lesion. The N-terminal half is responsible for the 3' incision and the C-terminal half is responsible for the 5' incision. This Mycolicibacterium paratuberculosis (strain ATCC BAA-968 / K-10) (Mycobacterium paratuberculosis) protein is UvrABC system protein C.